The primary structure comprises 205 residues: Protein-L-isoaspartate O-methyltransferase (205 aa).

Residue Ser56 is part of the active site.

This sequence belongs to the methyltransferase superfamily. L-isoaspartyl/D-aspartyl protein methyltransferase family.

Its subcellular location is the cytoplasm. It carries out the reaction [protein]-L-isoaspartate + S-adenosyl-L-methionine = [protein]-L-isoaspartate alpha-methyl ester + S-adenosyl-L-homocysteine. Its function is as follows. Catalyzes the methyl esterification of L-isoaspartyl residues in peptides and proteins that result from spontaneous decomposition of normal L-aspartyl and L-asparaginyl residues. It plays a role in the repair and/or degradation of damaged proteins. The chain is Protein-L-isoaspartate O-methyltransferase from Pyrobaculum arsenaticum (strain DSM 13514 / JCM 11321 / PZ6).